Here is a 311-residue protein sequence, read N- to C-terminus: Pyrimidine-specific ribonucleoside hydrolase RihA (311 aa).

H240 is an active-site residue.

This sequence belongs to the IUNH family. RihA subfamily.

Its function is as follows. Hydrolyzes with equal efficiency cytidine or uridine to ribose and cytosine or uracil, respectively. This is Pyrimidine-specific ribonucleoside hydrolase RihA from Escherichia coli O7:K1 (strain IAI39 / ExPEC).